Here is a 381-residue protein sequence, read N- to C-terminus: Translation initiation factor eIF2B subunit beta (381 aa).

The segment at Leu-125 to Thr-148 is disordered. Positions Lys-136 to Lys-145 are enriched in polar residues.

Belongs to the eIF-2B alpha/beta/delta subunits family. As to quaternary structure, component of the translation initiation factor 2B (eIF2B) complex which is a heterodecamer of two sets of five different subunits: alpha, beta, gamma, delta and epsilon. Subunits alpha, beta and delta comprise a regulatory subcomplex and subunits epsilon and gamma comprise a catalytic subcomplex. Within the complex, the hexameric regulatory complex resides at the center, with the two heterodimeric catalytic subcomplexes bound on opposite sides.

It localises to the cytoplasm. The protein localises to the cytosol. Functionally, acts as a component of the translation initiation factor 2B (eIF2B) complex, which catalyzes the exchange of GDP for GTP on the eukaryotic initiation factor 2 (eIF2) complex gamma subunit. Its guanine nucleotide exchange factor activity is repressed when bound to eIF2 complex phosphorylated on the alpha subunit, thereby limiting the amount of methionyl-initiator methionine tRNA available to the ribosome and consequently global translation is repressed. It activates the synthesis of GCN4 in yeast under amino acid starvation conditions by suppressing the inhibitory effects of multiple AUG codons present in the leader of GCN4 mRNA. It may promote either repression or activation of GCN4 expression depending on amino acid availability. GCD6 and GCD7 repress GCN4 expression at the translational level by ensuring that ribosomes which have translated UORF1 will reinitiate at UORF2, -3, or -4 and thus fail to reach the GCN4 start site. The protein is Translation initiation factor eIF2B subunit beta (GCD7) of Saccharomyces cerevisiae (strain ATCC 204508 / S288c) (Baker's yeast).